The sequence spans 144 residues: MIALIQRVSQAKVDVDKQTVGEIGHGLLVLLGVQKDDDHVKADRLIEKVLNYRVFSDAEGKMNLNVQQVKGQVLVVSQFTLAADTQKGLRPSFSRGASPDMAEALYDYVVKKCGEKIPTFSGQFAADMQVSLTNDGPVTFWLEI.

The Gly-cisPro motif, important for rejection of L-amino acids motif lies at 136-137 (GP).

Belongs to the DTD family. As to quaternary structure, homodimer.

The protein localises to the cytoplasm. The enzyme catalyses glycyl-tRNA(Ala) + H2O = tRNA(Ala) + glycine + H(+). The catalysed reaction is a D-aminoacyl-tRNA + H2O = a tRNA + a D-alpha-amino acid + H(+). An aminoacyl-tRNA editing enzyme that deacylates mischarged D-aminoacyl-tRNAs. Also deacylates mischarged glycyl-tRNA(Ala), protecting cells against glycine mischarging by AlaRS. Acts via tRNA-based rather than protein-based catalysis; rejects L-amino acids rather than detecting D-amino acids in the active site. By recycling D-aminoacyl-tRNA to D-amino acids and free tRNA molecules, this enzyme counteracts the toxicity associated with the formation of D-aminoacyl-tRNA entities in vivo and helps enforce protein L-homochirality. The polypeptide is D-aminoacyl-tRNA deacylase (Pasteurella multocida (strain Pm70)).